The sequence spans 293 residues: Phosphoribosylaminoimidazole-succinocarboxamide synthase (293 aa).

The protein belongs to the SAICAR synthetase family.

It carries out the reaction 5-amino-1-(5-phospho-D-ribosyl)imidazole-4-carboxylate + L-aspartate + ATP = (2S)-2-[5-amino-1-(5-phospho-beta-D-ribosyl)imidazole-4-carboxamido]succinate + ADP + phosphate + 2 H(+). The protein operates within purine metabolism; IMP biosynthesis via de novo pathway; 5-amino-1-(5-phospho-D-ribosyl)imidazole-4-carboxamide from 5-amino-1-(5-phospho-D-ribosyl)imidazole-4-carboxylate: step 1/2. This Bordetella petrii (strain ATCC BAA-461 / DSM 12804 / CCUG 43448) protein is Phosphoribosylaminoimidazole-succinocarboxamide synthase.